The chain runs to 269 residues: UPF0162 protein BU173 (269 aa).

Belongs to the UPF0162 family.

The protein is UPF0162 protein BU173 of Buchnera aphidicola subsp. Acyrthosiphon pisum (strain APS) (Acyrthosiphon pisum symbiotic bacterium).